A 222-amino-acid chain; its full sequence is N-(5'-phosphoribosyl)anthranilate isomerase (222 aa).

This sequence belongs to the TrpF family.

The catalysed reaction is N-(5-phospho-beta-D-ribosyl)anthranilate = 1-(2-carboxyphenylamino)-1-deoxy-D-ribulose 5-phosphate. Its pathway is amino-acid biosynthesis; L-tryptophan biosynthesis; L-tryptophan from chorismate: step 3/5. In Prosthecochloris aestuarii (strain DSM 271 / SK 413), this protein is N-(5'-phosphoribosyl)anthranilate isomerase.